Consider the following 310-residue polypeptide: MDNYTLLNEFILLGIPQTQGLETLLFVVFLFIYFFTLLGNSLIFTAIISSSTLHTPMYFFLGLLSVFDMLFPSVTCPKMLFYLSVRSPAISYKGCAAQLFFYHLLGSTEGCLYSVMAYDRYVAICHPLRYMLIMKPGVCVSLVIIAWLVGCLHATILTSLTFQLVYCASNQVDYFFCDLPAVLPLACTDSKLARKVGSINVGFLALMLLFSVCVSYVHIGVAILRIRSAEGRQKAFSTCSAHLTAILCAYGPVIIIYLQRTPNPLLGAVVQILNNIVSPMLNSLIYSLRNKEVKRSLRRVFQNITFHGQK.

The Extracellular portion of the chain corresponds to 1-23; that stretch reads MDNYTLLNEFILLGIPQTQGLET. The N-linked (GlcNAc...) asparagine glycan is linked to asparagine 3. Residues 24 to 44 traverse the membrane as a helical segment; sequence LLFVVFLFIYFFTLLGNSLIF. Topologically, residues 45–55 are cytoplasmic; the sequence is TAIISSSTLHT. The helical transmembrane segment at 56–76 threads the bilayer; the sequence is PMYFFLGLLSVFDMLFPSVTC. Residues 77–95 lie on the Extracellular side of the membrane; that stretch reads PKMLFYLSVRSPAISYKGC. Cysteine 95 and cysteine 187 are disulfide-bonded. A helical transmembrane segment spans residues 96-116; it reads AAQLFFYHLLGSTEGCLYSVM. At 117–136 the chain is on the cytoplasmic side; the sequence is AYDRYVAICHPLRYMLIMKP. A helical transmembrane segment spans residues 137 to 157; it reads GVCVSLVIIAWLVGCLHATIL. Over 158–202 the chain is Extracellular; the sequence is TSLTFQLVYCASNQVDYFFCDLPAVLPLACTDSKLARKVGSINVG. Residues 203-223 form a helical membrane-spanning segment; that stretch reads FLALMLLFSVCVSYVHIGVAI. Topologically, residues 224 to 237 are cytoplasmic; it reads LRIRSAEGRQKAFS. The chain crosses the membrane as a helical span at residues 238-258; the sequence is TCSAHLTAILCAYGPVIIIYL. Residues 259-264 lie on the Extracellular side of the membrane; it reads QRTPNP. Residues 265–285 form a helical membrane-spanning segment; the sequence is LLGAVVQILNNIVSPMLNSLI. At 286 to 310 the chain is on the cytoplasmic side; the sequence is YSLRNKEVKRSLRRVFQNITFHGQK.

The protein belongs to the G-protein coupled receptor 1 family.

Its subcellular location is the cell membrane. Its function is as follows. Odorant receptor. This Mus musculus (Mouse) protein is Olfactory receptor 10N1.